We begin with the raw amino-acid sequence, 296 residues long: Protease HtpX homolog (296 aa).

2 consecutive transmembrane segments (helical) span residues 14-34 (VVLL…VGYL) and 39-59 (YQFG…SMIF). Histidine 143 is a binding site for Zn(2+). Glutamate 144 is a catalytic residue. Histidine 147 is a Zn(2+) binding site. Transmembrane regions (helical) follow at residues 158–178 (IAVA…RMLF) and 195–215 (ILVL…ASLV). Glutamate 224 contacts Zn(2+).

This sequence belongs to the peptidase M48B family. Zn(2+) is required as a cofactor.

The protein resides in the cell membrane. The sequence is that of Protease HtpX homolog from Streptococcus agalactiae serotype Ia (strain ATCC 27591 / A909 / CDC SS700).